The sequence spans 955 residues: Eukaryotic translation initiation factor 3 subunit C (955 aa).

Disordered regions lie at residues 1-22 and 157-299; these read MSRF…SEPV and RAAP…EEGW. The segment covering 162 to 183 has biased composition (acidic residues); that stretch reads DFAEEEEDDEREDEKGSDEEEE. Residues 206-218 show a composition bias toward low complexity; that stretch reads VKPVADSDSSDWG. A compositionally biased stretch (acidic residues) spans 219 to 229; it reads SDSDSDSTSSD. A compositionally biased stretch (basic and acidic residues) spans 230–250; the sequence is EDAKYTSIRDRFLKKPEKGTE. A compositionally biased stretch (acidic residues) spans 288–297; the sequence is MFDENEEEEE. The 177-residue stretch at 658-834 folds into the PCI domain; the sequence is FHMHINLELL…ETIVMHRSEP (177 aa). Positions 865–955 are disordered; that stretch reads NFFQRGGNQG…RNVEYQNKAE (91 aa). Residues 882-894 show a composition bias toward low complexity; sequence YRNQNQNQNWNNN. Residues 911–955 are compositionally biased toward basic and acidic residues; that stretch reads GEGREQREHHRDHHRDQREHREHQNREFREQREQMRNVEYQNKAE.

This sequence belongs to the eIF-3 subunit C family. In terms of assembly, component of the eukaryotic translation initiation factor 3 (eIF-3) complex.

It localises to the cytoplasm. Component of the eukaryotic translation initiation factor 3 (eIF-3) complex, which is involved in protein synthesis of a specialized repertoire of mRNAs and, together with other initiation factors, stimulates binding of mRNA and methionyl-tRNAi to the 40S ribosome. The eIF-3 complex specifically targets and initiates translation of a subset of mRNAs involved in cell proliferation. The protein is Eukaryotic translation initiation factor 3 subunit C of Anopheles gambiae (African malaria mosquito).